A 306-amino-acid chain; its full sequence is Secreted RxLR effector protein 76 (306 aa).

A signal peptide spans 1-21 (MSGAFYVFTALLLVASDQIAA). The RxLR-dEER motif lies at 48–65 (RFLRGSRDEPDNLANEER). The tract at residues 105 to 142 (AAKAVKKRPRGAKAGRKMPRAAEAEAVKKVPRAGTAVK) is disordered. Basic residues predominate over residues 107-123 (KAVKKRPRGAKAGRKMP).

The protein belongs to the RxLR effector family.

It localises to the secreted. The protein resides in the host nucleus. Its function is as follows. Secreted effector that partially suppresses the host cell death induced by cell death-inducing proteins. This Plasmopara viticola (Downy mildew of grapevine) protein is Secreted RxLR effector protein 76.